The following is a 226-amino-acid chain: tRNA (guanine-N(1)-)-methyltransferase (226 aa).

S-adenosyl-L-methionine is bound by residues glycine 112 and 132–137 (IGDYVL).

Belongs to the RNA methyltransferase TrmD family. Homodimer.

Its subcellular location is the cytoplasm. It carries out the reaction guanosine(37) in tRNA + S-adenosyl-L-methionine = N(1)-methylguanosine(37) in tRNA + S-adenosyl-L-homocysteine + H(+). Specifically methylates guanosine-37 in various tRNAs. In Christiangramia forsetii (strain DSM 17595 / CGMCC 1.15422 / KT0803) (Gramella forsetii), this protein is tRNA (guanine-N(1)-)-methyltransferase.